Consider the following 134-residue polypeptide: MSVMLQSLNNIRTLRAMAREFSIDVLEEMLEKFRVVTKERREEEEQQQRELAERQEKISTWLELMKADGINPEELLGNSSAAAPRAGKKRQPRPAKYKFTDVNGETKTWTGQGRTPKPIAQALAEGKSLDDFLI.

A disordered region spans residues 73-94 (EELLGNSSAAAPRAGKKRQPRP). The DNA-binding element occupies 112-117 (QGRTPK).

The protein belongs to the histone-like protein H-NS family. As to quaternary structure, forms homodimers, can interact with H-NS. May interact with Hha and/or Cnu.

It localises to the cytoplasm. The protein localises to the nucleoid. Its function is as follows. A DNA-binding protein that acts in a fashion similar to H-NS, repressing gene transcription. A subset of H-NS/StpA-regulated genes require auxillary proteins for repression; these auxillary proteins (Hha and other similar proteins) may also modulate oligomerization of the H-NS/StpA complex. The protein is DNA-binding protein StpA (stpA) of Escherichia coli O157:H7.